Consider the following 88-residue polypeptide: Small ribosomal subunit protein bS20 (88 aa).

The disordered stretch occupies residues 1–21 (MANSAQAKKRARQNVKARKHN). The segment covering 7-21 (AKKRARQNVKARKHN) has biased composition (basic residues).

This sequence belongs to the bacterial ribosomal protein bS20 family.

Functionally, binds directly to 16S ribosomal RNA. The sequence is that of Small ribosomal subunit protein bS20 from Acinetobacter baumannii (strain AB307-0294).